Reading from the N-terminus, the 656-residue chain is Choline transporter-like protein 1 (656 aa).

A lipid anchor (N-myristoyl glycine) is attached at Gly2. Over 2 to 29 (GCCSSASAAQSSKREWKPLEDRSCTDIP) the chain is Cytoplasmic. The helical transmembrane segment at 30–50 (WLLLFVLFCIGMGFICGFSVA) threads the bilayer. At 51 to 211 (TGAAARLVSG…RLISGVMTSK (161 aa)) the chain is on the extracellular side. Asn134 and Asn179 each carry an N-linked (GlcNAc...) asparagine glycan. The chain crosses the membrane as a helical span at residues 212–232 (EIILGLCLLSLVLSMILMVII). The Cytoplasmic segment spans residues 233 to 237 (RYISR). Residues 238 to 258 (VLVWILTILVILGSLGGTGVL) form a helical membrane-spanning segment. Over 259–287 (WWLYAKQRRSPKETVIPEQLQIAEDNLRA) the chain is Extracellular. The chain crosses the membrane as a helical span at residues 288 to 308 (LLIYAISATVFTVILFLIMLV). Over 309-314 (MRKRVA) the chain is Cytoplasmic. A helical transmembrane segment spans residues 315–335 (LTIALFHVAGKVFIHLPLLVF). At 336–337 (QP) the chain is on the extracellular side. The chain crosses the membrane as a helical span at residues 338–358 (FWTFFALVLFWAYWIMTLLFL). The Cytoplasmic segment spans residues 359–379 (GTTGSAVQNEQGFVEYKISGP). Residues 380-400 (LQYMWWYHVVGLIWISEFILA) traverse the membrane as a helical segment. Topologically, residues 401-441 (CQQMTVAGAVVTYYFTRDKRNLPFTPILASVNRLIRYHLGT) are extracellular. A helical transmembrane segment spans residues 442–462 (VAKGSFIITLVKIPRMILMYI). Topologically, residues 463 to 536 (HSQLKGKENA…RVAAINTVGD (74 aa)) are cytoplasmic. A helical transmembrane segment spans residues 537 to 557 (FMLFLGKVLIVCSTGLAGIML). The Extracellular segment spans residues 558–565 (LNYQQDYT). The chain crosses the membrane as a helical span at residues 566-586 (VWVLPLIIVCLFAFLVAHCFL). Residues 587–656 (SIYEMVVDVL…KPMASGASSA (70 aa)) lie on the Cytoplasmic side of the membrane. The segment at 635–656 (AGKGGAADARKLKPMASGASSA) is disordered. The residue at position 651 (Ser651) is a Phosphoserine.

This sequence belongs to the CTL (choline transporter-like) family. Expressed in neurons, oligodendrocytes and astrocytes. Also expressed in the mucosal cell layer of the colon. In the developing brain, isoform 1 is expressed in both neurons and oligodendroglial cells, whereas isoform 2 is restricted to oligodendroglial cells.

Its subcellular location is the cell membrane. The protein resides in the mitochondrion outer membrane. It carries out the reaction choline(out) + n H(+)(in) = choline(in) + n H(+)(out). The catalysed reaction is ethanolamine(out) + n H(+)(in) = ethanolamine(in) + n H(+)(out). Its function is as follows. Choline transporter, acts as a choline/H+ antiporter. Also acts as a high-affinity ethanolamine/H+ antiporter, regulating the supply of extracellular ethanolamine (Etn) for the CDP-Etn pathway, redistribute intracellular Etn and balance the CDP-Cho and CDP-Etn arms of the Kennedy pathway. Involved in membrane synthesis and myelin production. The sequence is that of Choline transporter-like protein 1 (Slc44a1) from Rattus norvegicus (Rat).